The following is a 51-amino-acid chain: Lysis protein for colicin A (51 aa).

Residues 1–18 (MKKIIICVILLAIMLLAA) form the signal peptide. Residue Cys19 is the site of N-palmitoyl cysteine attachment. Cys19 is lipidated: S-diacylglycerol cysteine. The interval 27–51 (TGGGSVSPSSIVTGVSMGSDGVGNP) is disordered.

It localises to the cell outer membrane. Its function is as follows. Lysis proteins are required for both colicin release and partial cell lysis. The chain is Lysis protein for colicin A (cal) from Citrobacter freundii.